A 626-amino-acid polypeptide reads, in one-letter code: MSPEEVKARGWKELDVILVTGDAYVDHSSFGTAIIGRVLEDAGFRVGIIAQPRWENPEDFKKLGKPRLFFSVSAGNTDSMVSNLTPGLKPRNKDAYSPGGKTGLRPNRAAIIYSNRIKEAFPDMPIVLGGIEASMRRFAHYDYLSDKVRQSILADAPADLVVYGMGELQIVEIAKRLQAGEDIKGIRDISGTVWKMEVKAWKELKGKGKEKAGEQDESENATEEVAKDKSLDPAEFFKEYVEIPSFSEVSQDKAVFAKAFRTYFLEQNPVTGKGIVQPHPKTIIIQNKPMRPLTEAELDHVYELPYTGETHPSYTEPVPALEMVKFSLTTHRGCFGGCSFCAITQHQGRMIASRSIESILREAKKLTQKPDFKGIINGVGGPTANMYGMECRSWEKKGACLDKACLYPRVCPALDTSHKKLLELMHRLRELPGVRHVFTGYGVRYDLALEDEEYLEELCAHHISGQLRIAPEHFSGRVTDAMSKPGKEVYEKFADRFNAFNKKCGKEQYIVNYLMSGHPGCTLKDMIEMAEYVRDHGGYTEQVQDFTPTPMTVSTCMYYTGLDPFTGKKMYVARDKKEKAMQRALMHYRNPANYELVYEALEKAGRLDLVGNAHKCLIRRKERQRK.

Residues 206 to 227 are disordered; sequence GKGKEKAGEQDESENATEEVAK. Positions 320–589 constitute a Radical SAM core domain; sequence ALEMVKFSLT…AMQRALMHYR (270 aa). Residues C334, C338, and C341 each coordinate [4Fe-4S] cluster.

Belongs to the UPF0313 family. The cofactor is [4Fe-4S] cluster.

The polypeptide is UPF0313 protein MM_1287 (Methanosarcina mazei (strain ATCC BAA-159 / DSM 3647 / Goe1 / Go1 / JCM 11833 / OCM 88) (Methanosarcina frisia)).